The primary structure comprises 506 residues: NADH-quinone oxidoreductase subunit N 2 (506 aa).

A run of 14 helical transmembrane segments spans residues 11-31 (SLAYFAPELVLIAAALLLVVW), 44-64 (LVILSLAALACSGGLGAYFLA), 82-102 (FSNLFRVIFALVTGAIVLFLV), 117-137 (SGELFTLILVLSLGMNLMAAS), 140-160 (LLLIYLSLELVSVISFVLAGF), 175-195 (VIFGGVASGIMLYGMSWIFGI), 222-242 (VFVGTAFMLAGFGYKISAAPF), 254-274 (PTPVTAFLSVGPKAAGFAVLI), 289-309 (GVATPWPVLFGCLAMATMTVG), 323-345 (LAYSSIAHAGYMLLGFSVFSGAG), 356-376 (YCFMNLGAFMVVMAVAEESGG), 394-414 (AAAMAVFLVSLTGLPPTAGFI), 419-439 (LFSALLAAGGAWSWVIAVVGV), and 472-492 (LLGGTACALAIPTVLLGVYWG).

Belongs to the complex I subunit 2 family. As to quaternary structure, NDH-1 is composed of 14 different subunits. Subunits NuoA, H, J, K, L, M, N constitute the membrane sector of the complex.

It localises to the cell inner membrane. It catalyses the reaction a quinone + NADH + 5 H(+)(in) = a quinol + NAD(+) + 4 H(+)(out). Its function is as follows. NDH-1 shuttles electrons from NADH, via FMN and iron-sulfur (Fe-S) centers, to quinones in the respiratory chain. The immediate electron acceptor for the enzyme in this species is believed to be ubiquinone. Couples the redox reaction to proton translocation (for every two electrons transferred, four hydrogen ions are translocated across the cytoplasmic membrane), and thus conserves the redox energy in a proton gradient. This chain is NADH-quinone oxidoreductase subunit N 2, found in Sorangium cellulosum (strain So ce56) (Polyangium cellulosum (strain So ce56)).